We begin with the raw amino-acid sequence, 160 residues long: MFGMGFFEILVVLVVAIIFLGPEKFPQAVVDVVKFFRAVKKTLNDAKDTLDKEINIEEIKKETLEYQKLFENKVESLKGVKIEELEDAKITAENEIKSIQDLMQDYQRSLETNTIPNHLNEEVSNEEALNKEVSSDESPKEVQLATDNNTKEHDKEKEHV.

A helical membrane pass occupies residues 1 to 21 (MFGMGFFEILVVLVVAIIFLG). Residues 118 to 160 (HLNEEVSNEEALNKEVSSDESPKEVQLATDNNTKEHDKEKEHV) form a disordered region. 2 stretches are compositionally biased toward basic and acidic residues: residues 128-140 (ALNKEVSSDESPK) and 149-160 (NTKEHDKEKEHV).

Belongs to the TatB family. As to quaternary structure, the Tat system comprises two distinct complexes: a TatABC complex, containing multiple copies of TatA, TatB and TatC subunits, and a separate TatA complex, containing only TatA subunits. Substrates initially bind to the TatABC complex, which probably triggers association of the separate TatA complex to form the active translocon.

The protein resides in the cell inner membrane. Part of the twin-arginine translocation (Tat) system that transports large folded proteins containing a characteristic twin-arginine motif in their signal peptide across membranes. Together with TatC, TatB is part of a receptor directly interacting with Tat signal peptides. TatB may form an oligomeric binding site that transiently accommodates folded Tat precursor proteins before their translocation. The sequence is that of Sec-independent protein translocase protein TatB from Helicobacter pylori (strain HPAG1).